The following is a 322-amino-acid chain: Pantothenate kinase (322 aa).

An ATP-binding site is contributed by 100–107 (GSVAVGKS).

It belongs to the prokaryotic pantothenate kinase family.

It localises to the cytoplasm. The catalysed reaction is (R)-pantothenate + ATP = (R)-4'-phosphopantothenate + ADP + H(+). It participates in cofactor biosynthesis; coenzyme A biosynthesis; CoA from (R)-pantothenate: step 1/5. This Agrobacterium fabrum (strain C58 / ATCC 33970) (Agrobacterium tumefaciens (strain C58)) protein is Pantothenate kinase.